The sequence spans 877 residues: Leucine--tRNA ligase (877 aa).

The short motif at 48–58 (PYPSGKLHMGH) is the 'HIGH' region element. The short motif at 636–640 (KMSKS) is the 'KMSKS' region element. An ATP-binding site is contributed by lysine 639.

This sequence belongs to the class-I aminoacyl-tRNA synthetase family.

The protein resides in the cytoplasm. The catalysed reaction is tRNA(Leu) + L-leucine + ATP = L-leucyl-tRNA(Leu) + AMP + diphosphate. This Ralstonia nicotianae (strain ATCC BAA-1114 / GMI1000) (Ralstonia solanacearum) protein is Leucine--tRNA ligase.